A 65-amino-acid chain; its full sequence is Conopeptide Vt3.2 (65 aa).

The N-terminal stretch at 1-12 (LLFPLATLQLNA) is a signal peptide. A propeptide spanning residues 13-48 (DQPVERNAENIQDLNPDKRFIFMPVPRRRGPYGSVH) is cleaved from the precursor. S64 bears the Serine amide mark.

This sequence belongs to the conotoxin M superfamily. Homodimer; disulfide-linked. In terms of tissue distribution, expressed by the venom duct.

It is found in the secreted. This is Conopeptide Vt3.2 from Conus planorbis (Planorbis cone).